A 360-amino-acid polypeptide reads, in one-letter code: Phospho-N-acetylmuramoyl-pentapeptide-transferase (360 aa).

Helical transmembrane passes span 26–46 (AIVS…RMIA), 72–92 (PTMG…LWAY), 94–114 (SNPY…IGFV), 132–152 (WKYF…YLAG), 168–188 (VMPQ…VGTG), 199–219 (GLAI…AWAT), 236–256 (AGEL…FLWF), 263–283 (VFMG…IAVL), 288–308 (FLLV…ILQV), and 338–358 (VIVR…ATLK).

This sequence belongs to the glycosyltransferase 4 family. MraY subfamily. Mg(2+) is required as a cofactor.

The protein resides in the cell inner membrane. The catalysed reaction is UDP-N-acetyl-alpha-D-muramoyl-L-alanyl-gamma-D-glutamyl-meso-2,6-diaminopimeloyl-D-alanyl-D-alanine + di-trans,octa-cis-undecaprenyl phosphate = di-trans,octa-cis-undecaprenyl diphospho-N-acetyl-alpha-D-muramoyl-L-alanyl-D-glutamyl-meso-2,6-diaminopimeloyl-D-alanyl-D-alanine + UMP. It participates in cell wall biogenesis; peptidoglycan biosynthesis. Functionally, catalyzes the initial step of the lipid cycle reactions in the biosynthesis of the cell wall peptidoglycan: transfers peptidoglycan precursor phospho-MurNAc-pentapeptide from UDP-MurNAc-pentapeptide onto the lipid carrier undecaprenyl phosphate, yielding undecaprenyl-pyrophosphoryl-MurNAc-pentapeptide, known as lipid I. The polypeptide is Phospho-N-acetylmuramoyl-pentapeptide-transferase (Klebsiella pneumoniae subsp. pneumoniae (strain ATCC 700721 / MGH 78578)).